The following is a 188-amino-acid chain: Elongation factor P (188 aa).

It belongs to the elongation factor P family.

The protein localises to the cytoplasm. The protein operates within protein biosynthesis; polypeptide chain elongation. In terms of biological role, involved in peptide bond synthesis. Stimulates efficient translation and peptide-bond synthesis on native or reconstituted 70S ribosomes in vitro. Probably functions indirectly by altering the affinity of the ribosome for aminoacyl-tRNA, thus increasing their reactivity as acceptors for peptidyl transferase. This is Elongation factor P from Exiguobacterium sp. (strain ATCC BAA-1283 / AT1b).